The sequence spans 502 residues: Protein MGF 505-5R (502 aa).

This sequence belongs to the asfivirus MGF 505 family.

In terms of biological role, plays a role in virus cell tropism, and may be required for efficient virus replication in macrophages. The chain is Protein MGF 505-5R from African swine fever virus (isolate Tick/Malawi/Lil 20-1/1983) (ASFV).